The following is a 233-amino-acid chain: Probable fimbrial chaperone protein ElfD (233 aa).

An N-terminal signal peptide occupies residues 1-26; that stretch reads MKTCITKGIVTVSLTAILLSCSSTWA.

It belongs to the periplasmic pilus chaperone family.

Its subcellular location is the periplasm. Its function is as follows. Part of the elfADCG fimbrial operon, which could be required for adherence to host epithelial cells. Could be required for the biogenesis of the ElfA fimbriae. This Escherichia coli O157:H7 protein is Probable fimbrial chaperone protein ElfD (elfD).